The chain runs to 362 residues: S-adenosylmethionine:tRNA ribosyltransferase-isomerase (362 aa).

This sequence belongs to the QueA family. Monomer.

It is found in the cytoplasm. It carries out the reaction 7-aminomethyl-7-carbaguanosine(34) in tRNA + S-adenosyl-L-methionine = epoxyqueuosine(34) in tRNA + adenine + L-methionine + 2 H(+). The protein operates within tRNA modification; tRNA-queuosine biosynthesis. Functionally, transfers and isomerizes the ribose moiety from AdoMet to the 7-aminomethyl group of 7-deazaguanine (preQ1-tRNA) to give epoxyqueuosine (oQ-tRNA). The protein is S-adenosylmethionine:tRNA ribosyltransferase-isomerase of Yersinia enterocolitica serotype O:8 / biotype 1B (strain NCTC 13174 / 8081).